The chain runs to 163 residues: Photosystem II extrinsic protein V (163 aa).

A signal peptide spans methionine 1–alanine 26. Heme c contacts are provided by histidine 67 and histidine 118.

It belongs to the cytochrome c family. PsbV subfamily. In terms of assembly, PSII is composed of 1 copy each of membrane proteins PsbA, PsbB, PsbC, PsbD, PsbE, PsbF, PsbH, PsbI, PsbJ, PsbK, PsbL, PsbM, PsbT, PsbX, PsbY, PsbZ, Psb30/Ycf12, peripheral proteins PsbO, CyanoQ (PsbQ), PsbU, PsbV and a large number of cofactors. It forms dimeric complexes. Heme c serves as cofactor.

The protein resides in the cellular thylakoid membrane. Functionally, one of the extrinsic, lumenal subunits of photosystem II (PSII). PSII is a light-driven water plastoquinone oxidoreductase, using light energy to abstract electrons from H(2)O, generating a proton gradient subsequently used for ATP formation. The extrinsic proteins stabilize the structure of photosystem II oxygen-evolving complex (OEC), the ion environment of oxygen evolution and protect the OEC against heat-induced inactivation. Low-potential cytochrome c that plays a role in the OEC of PSII. The sequence is that of Photosystem II extrinsic protein V from Thermosynechococcus vestitus (strain NIES-2133 / IAM M-273 / BP-1).